A 192-amino-acid polypeptide reads, in one-letter code: Phosphoheptose isomerase (192 aa).

An SIS domain is found at 35–192; sequence LIETLENQGK…CIERHFAHKN (158 aa). 50–52 lines the substrate pocket; sequence NGG. Zn(2+)-binding residues include histidine 59 and glutamate 63. Substrate is bound by residues glutamate 63, 92-93, 118-120, serine 123, and glutamine 170; these read ND and STS. Positions 170 and 178 each coordinate Zn(2+).

This sequence belongs to the SIS family. GmhA subfamily. As to quaternary structure, homotetramer. Requires Zn(2+) as cofactor.

It localises to the cytoplasm. It carries out the reaction 2 D-sedoheptulose 7-phosphate = D-glycero-alpha-D-manno-heptose 7-phosphate + D-glycero-beta-D-manno-heptose 7-phosphate. It functions in the pathway carbohydrate biosynthesis; D-glycero-D-manno-heptose 7-phosphate biosynthesis; D-glycero-alpha-D-manno-heptose 7-phosphate and D-glycero-beta-D-manno-heptose 7-phosphate from sedoheptulose 7-phosphate: step 1/1. Functionally, catalyzes the isomerization of sedoheptulose 7-phosphate in D-glycero-D-manno-heptose 7-phosphate. The sequence is that of Phosphoheptose isomerase from Helicobacter pylori (strain HPAG1).